Here is an 81-residue protein sequence, read N- to C-terminus: Photosystem I iron-sulfur center (81 aa).

4Fe-4S ferredoxin-type domains are found at residues 2-31 (AHSVKIYDTCIGCTQCVRACPTDVLEMVPW) and 39-68 (IASAPRTEDCVGCKRCESACPTDFLSVRVY). [4Fe-4S] cluster-binding residues include cysteine 11, cysteine 14, cysteine 17, cysteine 21, cysteine 48, cysteine 51, cysteine 54, and cysteine 58.

In terms of assembly, the eukaryotic PSI reaction center is composed of at least 11 subunits. Requires [4Fe-4S] cluster as cofactor.

It localises to the plastid. Its subcellular location is the chloroplast thylakoid membrane. The catalysed reaction is reduced [plastocyanin] + hnu + oxidized [2Fe-2S]-[ferredoxin] = oxidized [plastocyanin] + reduced [2Fe-2S]-[ferredoxin]. Functionally, apoprotein for the two 4Fe-4S centers FA and FB of photosystem I (PSI); essential for photochemical activity. FB is the terminal electron acceptor of PSI, donating electrons to ferredoxin. The C-terminus interacts with PsaA/B/D and helps assemble the protein into the PSI complex. Required for binding of PsaD and PsaE to PSI. PSI is a plastocyanin-ferredoxin oxidoreductase, converting photonic excitation into a charge separation, which transfers an electron from the donor P700 chlorophyll pair to the spectroscopically characterized acceptors A0, A1, FX, FA and FB in turn. In Physcomitrium patens (Spreading-leaved earth moss), this protein is Photosystem I iron-sulfur center.